Reading from the N-terminus, the 310-residue chain is Cytochrome f (310 aa).

Positions 1–27 are cleaved as a signal peptide; it reads MRRHLSLFLGSLVIGLALLIAPAASWA. Positions 28, 48, 51, and 52 each coordinate heme. A helical membrane pass occupies residues 277 to 297; sequence IYGLLAFFAAVALAQIMLVLK.

This sequence belongs to the cytochrome f family. The 4 large subunits of the cytochrome b6-f complex are cytochrome b6, subunit IV (17 kDa polypeptide, PetD), cytochrome f and the Rieske protein, while the 4 small subunits are PetG, PetL, PetM and PetN. The complex functions as a dimer. Heme is required as a cofactor.

Its subcellular location is the cellular thylakoid membrane. Component of the cytochrome b6-f complex, which mediates electron transfer between photosystem II (PSII) and photosystem I (PSI), cyclic electron flow around PSI, and state transitions. The protein is Cytochrome f of Synechococcus sp. (strain CC9605).